Consider the following 409-residue polypeptide: Mitochondrial import inner membrane translocase subunit TIM50-B (409 aa).

A mitochondrion-targeting transit peptide spans 1–42 (MSLIAIERVLCGWPKICRKLIVTSRSLTSGLRRALVKQPRKG). The Mitochondrial matrix portion of the chain corresponds to 43–127 (GDVGKPGMEL…ELERAFRRMK (85 aa)). A disordered region spans residues 93-114 (PQTSEESNDEESRERRKLEEEE). Basic and acidic residues predominate over residues 102–111 (EESRERRKLE). The chain crosses the membrane as a helical span at residues 128–148 (LGFGLFGIGSMLFSFWAIYFY). The Mitochondrial intermembrane segment spans residues 149–409 (GRPSLDEHGN…KNWTRGFINH (261 aa)). Positions 205-348 (YVQPPYTLVL…FELTSFLSVL (144 aa)) constitute an FCP1 homology domain.

The protein belongs to the TIM50 family. As to quaternary structure, component of the TIM23 complex at least composed of Tim23, Tim17 (Tim17a1, Tim17a2 or Tim17b1) and a Tim50. Exclusively expressed in the testis.

The protein resides in the mitochondrion inner membrane. Functionally, essential component of the TIM23 complex, a complex that mediates the translocation of transit peptide-containing proteins across the mitochondrial inner membrane. The protein is Mitochondrial import inner membrane translocase subunit TIM50-B (ttm2) of Drosophila melanogaster (Fruit fly).